We begin with the raw amino-acid sequence, 127 residues long: DNA-directed RNA polymerase subunit omega (127 aa).

The protein belongs to the RNA polymerase subunit omega family. As to quaternary structure, the RNAP catalytic core consists of 2 alpha, 1 beta, 1 beta' and 1 omega subunit. When a sigma factor is associated with the core the holoenzyme is formed, which can initiate transcription.

It catalyses the reaction RNA(n) + a ribonucleoside 5'-triphosphate = RNA(n+1) + diphosphate. Promotes RNA polymerase assembly. Latches the N- and C-terminal regions of the beta' subunit thereby facilitating its interaction with the beta and alpha subunits. The polypeptide is DNA-directed RNA polymerase subunit omega (rpoZ) (Rickettsia prowazekii (strain Madrid E)).